Reading from the N-terminus, the 393-residue chain is Ig gamma-1 chain C region, membrane-bound form (393 aa).

The tract at residues 1–97 (AKTTPPSVYP…ASSTKVDKKI (97 aa)) is CH1. An intrachain disulfide couples Cys-27 to Cys-82. The hinge stretch occupies residues 98–110 (VPRDCGCKPCICT). The tract at residues 111–217 (VPEVSSVFIF…PIEKTISKTK (107 aa)) is CH2. Intrachain disulfides connect Cys-138-Cys-198 and Cys-244-Cys-302. An N-linked (GlcNAc...) asparagine glycan is attached at Asn-174. The segment at 218-324 (GRPKAPQVYT…EKSLSHSPGL (107 aa)) is CH3. The helical transmembrane segment at 340–357 (GLWTTITIFISLFLLSVC) threads the bilayer. The Cytoplasmic segment spans residues 358–393 (YSAAVTLFKVKWIFSSVVELKQTLVPEYKNMIGQAP).

It localises to the cell membrane. The polypeptide is Ig gamma-1 chain C region, membrane-bound form (Ighg1) (Mus musculus (Mouse)).